Here is a 754-residue protein sequence, read N- to C-terminus: 5-methyltetrahydropteroyltriglutamate--homocysteine methyltransferase (754 aa).

Residues Arg15–Lys18 and Lys114 each bind 5-methyltetrahydropteroyltri-L-glutamate. L-homocysteine-binding positions include Ile430–Ser432 and Glu483. L-methionine-binding positions include Ile430–Ser432 and Glu483. 5-methyltetrahydropteroyltri-L-glutamate-binding positions include Arg514 to Cys515 and Trp560. Asp598 contacts L-homocysteine. Asp598 provides a ligand contact to L-methionine. Glu604 contacts 5-methyltetrahydropteroyltri-L-glutamate. Zn(2+) is bound by residues His641, Cys643, and Glu665. His694 functions as the Proton donor in the catalytic mechanism. Cys726 serves as a coordination point for Zn(2+).

It belongs to the vitamin-B12 independent methionine synthase family. Requires Zn(2+) as cofactor.

The enzyme catalyses 5-methyltetrahydropteroyltri-L-glutamate + L-homocysteine = tetrahydropteroyltri-L-glutamate + L-methionine. It participates in amino-acid biosynthesis; L-methionine biosynthesis via de novo pathway; L-methionine from L-homocysteine (MetE route): step 1/1. Its function is as follows. Catalyzes the transfer of a methyl group from 5-methyltetrahydrofolate to homocysteine resulting in methionine formation. The sequence is that of 5-methyltetrahydropteroyltriglutamate--homocysteine methyltransferase from Campylobacter jejuni subsp. jejuni serotype O:23/36 (strain 81-176).